Consider the following 449-residue polypeptide: MELETHLSKYFTLAFTHKSMSLEMREKLAINSSATLKEFLQTIKTHCPNIKECMVLSTCNRFEIYASLKHNTHANEQKNALLKILAQNKKMSMSDLEKCVLMNTDESAVHHVFSVCSSLDSLVVGETQITGQMKNAYRFAFEEKFCSKDLTRLLHFAFKCAAKVRNLTGISKQGVSISSVAVKEALNIFEKERIKDKKALVIGLGEMAQLVIKHLLNKQFEVLILGRNAAKFEDFIKELEEPKKVSFQNIENLNAYINAYALLFCATSSPHFIVQNRMLKETSFRRFWFDLAVPRNIEKPVFNNIFLYSVDDLEPMVRENVGNRQESRTRAYEIVGLATMEFYQWIQSLEVEPLIKDLRELARISAQKELQKALKKRYVPKEYEGNIEKILHNAFNTFLHHPTIALKKNAQKEESDVLVGAIKNLFNLDKSTTCHAQNLNLYKCEYYEE.

Substrate is bound by residues 58 to 61, serine 121, 126 to 128, and glutamine 132; these read TCNR and ETQ. Residue cysteine 59 is the Nucleophile of the active site. NADP(+) is bound at residue 203–208; it reads GLGEMA.

This sequence belongs to the glutamyl-tRNA reductase family. Homodimer.

The enzyme catalyses (S)-4-amino-5-oxopentanoate + tRNA(Glu) + NADP(+) = L-glutamyl-tRNA(Glu) + NADPH + H(+). It functions in the pathway porphyrin-containing compound metabolism; protoporphyrin-IX biosynthesis; 5-aminolevulinate from L-glutamyl-tRNA(Glu): step 1/2. Its function is as follows. Catalyzes the NADPH-dependent reduction of glutamyl-tRNA(Glu) to glutamate 1-semialdehyde (GSA). The protein is Glutamyl-tRNA reductase of Helicobacter pylori (strain G27).